The chain runs to 450 residues: Bifunctional protein GlmU (450 aa).

The segment at 1 to 229 (MRRHAIILAA…VEEIMGVNDR (229 aa)) is pyrophosphorylase. UDP-N-acetyl-alpha-D-glucosamine-binding positions include 8 to 11 (LAAG), Lys22, Gln72, and 77 to 78 (GT). Asp102 serves as a coordination point for Mg(2+). The UDP-N-acetyl-alpha-D-glucosamine site is built by Gly139, Glu154, and Asn227. Asn227 provides a ligand contact to Mg(2+). Positions 230 to 250 (VMLSQAENAMQRRTNHYHMLN) are linker. Residues 251–450 (GVTIIDPDST…RQTTKEGYRK (200 aa)) form an N-acetyltransferase region. UDP-N-acetyl-alpha-D-glucosamine contacts are provided by Arg332 and Lys350. His362 serves as the catalytic Proton acceptor. UDP-N-acetyl-alpha-D-glucosamine-binding residues include Tyr365 and Asn376. Acetyl-CoA-binding positions include 385 to 386 (NY), Ala422, and Arg439.

The protein in the N-terminal section; belongs to the N-acetylglucosamine-1-phosphate uridyltransferase family. This sequence in the C-terminal section; belongs to the transferase hexapeptide repeat family. In terms of assembly, homotrimer. It depends on Mg(2+) as a cofactor.

It is found in the cytoplasm. The enzyme catalyses alpha-D-glucosamine 1-phosphate + acetyl-CoA = N-acetyl-alpha-D-glucosamine 1-phosphate + CoA + H(+). It carries out the reaction N-acetyl-alpha-D-glucosamine 1-phosphate + UTP + H(+) = UDP-N-acetyl-alpha-D-glucosamine + diphosphate. Its pathway is nucleotide-sugar biosynthesis; UDP-N-acetyl-alpha-D-glucosamine biosynthesis; N-acetyl-alpha-D-glucosamine 1-phosphate from alpha-D-glucosamine 6-phosphate (route II): step 2/2. It participates in nucleotide-sugar biosynthesis; UDP-N-acetyl-alpha-D-glucosamine biosynthesis; UDP-N-acetyl-alpha-D-glucosamine from N-acetyl-alpha-D-glucosamine 1-phosphate: step 1/1. It functions in the pathway bacterial outer membrane biogenesis; LPS lipid A biosynthesis. Catalyzes the last two sequential reactions in the de novo biosynthetic pathway for UDP-N-acetylglucosamine (UDP-GlcNAc). The C-terminal domain catalyzes the transfer of acetyl group from acetyl coenzyme A to glucosamine-1-phosphate (GlcN-1-P) to produce N-acetylglucosamine-1-phosphate (GlcNAc-1-P), which is converted into UDP-GlcNAc by the transfer of uridine 5-monophosphate (from uridine 5-triphosphate), a reaction catalyzed by the N-terminal domain. In Staphylococcus aureus (strain MRSA252), this protein is Bifunctional protein GlmU.